The following is a 377-amino-acid chain: MKEGSFVELSEYKHLIEEMQSAVDDFRGSLDLDALNESIQENEARMAEPGFWDDQAAAQKVIDENNVLKGKYDTFKQLADEVGDLAVAYELLSEEPDAEMQAEFETDFQHAEHDLQQYRLNLLLDGPYDRNNAILEIHPGAGGTESQDWGAMLLRMYTRWAASHNFKVETVDYQAGDEAGIKSVTLLISGHNAYGYLRSEKGVHRLVRISPFDAAGRRHTSFASVDVMPELDDTVDVDIRPEDLKIDVYRASGAGGQHVNKTSSAVRITHVPTGIVVASQAQRSQLQNRQTALNMLRAKLYEREEEKKAKERAAIQGEQMDIGWGSQIRSYVFHPYTMVKDHRTNYESHHGQAVMDGDLDPFMDAYLQWKLAQRNPQ.

An N5-methylglutamine modification is found at Gln257.

It belongs to the prokaryotic/mitochondrial release factor family. Post-translationally, methylated by PrmC. Methylation increases the termination efficiency of RF2.

It is found in the cytoplasm. Peptide chain release factor 2 directs the termination of translation in response to the peptide chain termination codons UGA and UAA. This chain is Peptide chain release factor 2, found in Lactiplantibacillus plantarum (strain ATCC BAA-793 / NCIMB 8826 / WCFS1) (Lactobacillus plantarum).